We begin with the raw amino-acid sequence, 295 residues long: Nucleotide-binding protein RD1_1380 (295 aa).

An ATP-binding site is contributed by 16–23 (GPSGAGRS). GTP is bound at residue 63–66 (DPRN).

The protein belongs to the RapZ-like family.

Its function is as follows. Displays ATPase and GTPase activities. The polypeptide is Nucleotide-binding protein RD1_1380 (Roseobacter denitrificans (strain ATCC 33942 / OCh 114) (Erythrobacter sp. (strain OCh 114))).